A 765-amino-acid chain; its full sequence is Spastin (765 aa).

Residues 1–94 are disordered; the sequence is MVRTKNQSSS…TSGYGPRGGT (94 aa). Residues 1-107 lie on the Cytoplasmic side of the membrane; it reads MVRTKNQSSS…KQNLYVVSFP (107 aa). Residues 1–195 form a required for localization to punctate cytoplasmic foci region; that stretch reads MVRTKNQSSS…ALLPLEMATN (195 aa). A compositionally biased stretch (low complexity) spans 8 to 19; the sequence is SSSSSASSSTKS. Residues 48 to 58 are compositionally biased toward polar residues; the sequence is SSKLSSNRQRA. Residues 59–72 show a composition bias toward low complexity; it reads TITTTTTSTTPGSS. The helical intramembrane region spans 108 to 128; that stretch reads IIFLFNVLRSLIYQLFCIFRY. At 129–765 the chain is on the cytoplasmic side; it reads LYCASTKVIY…WSQDYGDITI (637 aa). The interval 193 to 765 is sufficient for interaction with microtubules and microtubule severing; sequence ATNRGGSGGY…WSQDYGDITI (573 aa). An MIT domain is found at 218-293; the sequence is HRRAFEYISK…SMARDRLHFL (76 aa). Residues 329-462 are disordered; the sequence is QTNSKAAAVE…GSGSGASTPM (134 aa). Residues 355-364 show a composition bias toward low complexity; it reads SGTGSSAGTS. Polar residues-rich tracts occupy residues 389 to 407 and 428 to 444; these read NKSQ…STSV and QFSS…RTPI. The required for interaction with microtubules stretch occupies residues 446–462; the sequence is NNAASGSGSGSGASTPM. 530–537 contacts ATP; that stretch reads GPPGNGKT.

Belongs to the AAA ATPase family. Spastin subfamily. As to quaternary structure, homohexamer. The homohexamer is stabilized by ATP-binding. The homohexamer may adopt a ring conformation through which microtubules pass prior to being severed. Interacts with microtubules. Interacts with atl; may be involved in microtubule dynamics.

It is found in the membrane. Its subcellular location is the cytoplasm. The protein localises to the cytoskeleton. It localises to the microtubule organizing center. The protein resides in the centrosome. It is found in the chromosome. Its subcellular location is the lipid droplet. The catalysed reaction is n ATP + n H2O + a microtubule = n ADP + n phosphate + (n+1) alpha/beta tubulin heterodimers.. Functionally, ATP-dependent microtubule severing protein. Stimulates microtubule minus-end depolymerization and poleward microtubule flux in the mitotic spindle. Regulates microtubule stability in the neuromuscular junction synapse. Involved in lipid metabolism by regulating the size and distribution of lipid droplets. Involved in axon regeneration by regulating microtubule severing. This is Spastin from Drosophila mojavensis (Fruit fly).